The following is a 261-amino-acid chain: Cytochrome c oxidase subunit 3 (261 aa).

Residues 1–15 (MTHQTHAYHMVNPSP) are Mitochondrial matrix-facing. The helical transmembrane segment at 16-34 (WPLTGALSALLMTSGLIMW) threads the bilayer. Residues 35–40 (FHFNST) lie on the Mitochondrial intermembrane side of the membrane. A helical membrane pass occupies residues 41–66 (TLLMLGLTTNMLTMYQWWRDVIREST). Topologically, residues 67 to 72 (FQGHHT) are mitochondrial matrix. Residues 73 to 105 (PNVQKGLRYGMILFIISEVLFFTGFFWAFYHSS) traverse the membrane as a helical segment. At 106 to 128 (LAPTPELGGCWPPTGINPLNPLE) the chain is on the mitochondrial intermembrane side. A helical transmembrane segment spans residues 129–152 (VPLLNTSVLLASGVSITWAHHSLM). Residues 153–155 (EGN) lie on the Mitochondrial matrix side of the membrane. The chain crosses the membrane as a helical span at residues 156–183 (RNHMLQALFITIALGVYFTLLQASEYYE). The Mitochondrial intermembrane segment spans residues 184-190 (APFTISD). Residues 191-223 (GVYGSTFFVATGFHGLHVIIGSTFLIVCFFRQL) form a helical membrane-spanning segment. The Mitochondrial matrix portion of the chain corresponds to 224–232 (KFHFTSNHH). Residues 233–256 (FGFEAAAWYWHFVDVVWLFLYVSI) traverse the membrane as a helical segment. The Mitochondrial intermembrane portion of the chain corresponds to 257–261 (YWWGS).

This sequence belongs to the cytochrome c oxidase subunit 3 family. Component of the cytochrome c oxidase (complex IV, CIV), a multisubunit enzyme composed of 14 subunits. The complex is composed of a catalytic core of 3 subunits MT-CO1, MT-CO2 and MT-CO3, encoded in the mitochondrial DNA, and 11 supernumerary subunits COX4I, COX5A, COX5B, COX6A, COX6B, COX6C, COX7A, COX7B, COX7C, COX8 and NDUFA4, which are encoded in the nuclear genome. The complex exists as a monomer or a dimer and forms supercomplexes (SCs) in the inner mitochondrial membrane with NADH-ubiquinone oxidoreductase (complex I, CI) and ubiquinol-cytochrome c oxidoreductase (cytochrome b-c1 complex, complex III, CIII), resulting in different assemblies (supercomplex SCI(1)III(2)IV(1) and megacomplex MCI(2)III(2)IV(2)).

The protein resides in the mitochondrion inner membrane. It catalyses the reaction 4 Fe(II)-[cytochrome c] + O2 + 8 H(+)(in) = 4 Fe(III)-[cytochrome c] + 2 H2O + 4 H(+)(out). Functionally, component of the cytochrome c oxidase, the last enzyme in the mitochondrial electron transport chain which drives oxidative phosphorylation. The respiratory chain contains 3 multisubunit complexes succinate dehydrogenase (complex II, CII), ubiquinol-cytochrome c oxidoreductase (cytochrome b-c1 complex, complex III, CIII) and cytochrome c oxidase (complex IV, CIV), that cooperate to transfer electrons derived from NADH and succinate to molecular oxygen, creating an electrochemical gradient over the inner membrane that drives transmembrane transport and the ATP synthase. Cytochrome c oxidase is the component of the respiratory chain that catalyzes the reduction of oxygen to water. Electrons originating from reduced cytochrome c in the intermembrane space (IMS) are transferred via the dinuclear copper A center (CU(A)) of subunit 2 and heme A of subunit 1 to the active site in subunit 1, a binuclear center (BNC) formed by heme A3 and copper B (CU(B)). The BNC reduces molecular oxygen to 2 water molecules using 4 electrons from cytochrome c in the IMS and 4 protons from the mitochondrial matrix. The protein is Cytochrome c oxidase subunit 3 (MT-CO3) of Gazella subgutturosa (Goitred gazelle).